A 591-amino-acid chain; its full sequence is Paxillin (591 aa).

M1 bears the N-acetylmethionine mark. An LD motif 1 motif is present at residues 3–15 (DLDALLADLESTT). Residues 17-139 (HISKRPVFLS…SPTVMSSSLG (123 aa)) are disordered. Y31 is modified (phosphotyrosine; by PTK6). The span at 45-54 (VPPPVPPPPS) shows a compositional bias: pro residues. S83 is modified (phosphoserine). The residue at position 88 (Y88) is a Phosphotyrosine. The segment covering 89–99 (SSSAKNSSASN) has biased composition (low complexity). S106 is subject to Phosphoserine. Y118 bears the Phosphotyrosine; by PTK6 mark. Phosphoserine is present on residues S119, S126, and S130. Residues 121–137 (PNKQKSAEPSPTVMSSS) show a composition bias toward polar residues. T132 carries the post-translational modification Phosphothreonine. Phosphoserine occurs at positions 137, 140, and 143. Positions 144–156 (ELDRLLLELNAVQ) match the LD motif 2 motif. The interval 156-261 (QHSPPGFPAD…QQQTRISASS (106 aa)) is disordered. The residue at position 181 (Y181) is a Phosphotyrosine. Residues 216-228 (SVESLLDELESSV) carry the LD motif 3 motif. A Phosphoserine modification is found at S230. The span at 236 to 261 (TVNQGEMSSPQRVTSSQQQTRISASS) shows a compositional bias: polar residues. A Phosphoserine; by CDK5 modification is found at S244. S250, S258, S261, S272, S303, S322, S332, and S340 each carry phosphoserine. The interval 262–315 (ATRELDELMASLSDFKMQGLEQRVDGERPWAAGWPPSSRQSSPEGQDEGGFMAQ) is required for binding to PARVA and ILK. Positions 265–276 (ELDELMASLSDF) match the LD motif 4 motif. Residues 289 to 338 (RPWAAGWPPSSRQSSPEGQDEGGFMAQGKTGSSSPPGGLSKPGSQLDSML) form a disordered region. Positions 315-334 (QGKTGSSSPPGGLSKPGSQL) are enriched in low complexity. The LD motif 5 motif lies at 333–345 (QLDSMLGSLQSDL). LIM zinc-binding domains are found at residues 356–415 (GVCG…LFSP), 416–473 (RCYY…DMFA), 474–533 (PKCG…RRGS), and 534–591 (LCSG…KLFC). Position 533 is a phosphoserine (S533).

Belongs to the paxillin family. In terms of assembly, interacts in vitro with VCL/vinculin as well as to the SH3 domain of SRC and, when tyrosine phosphorylated, to the SH2 domain of CRK. Interacts with GIT1. Interacts with NUDT16L1/SDOS. Interacts with PTK2/FAK1. Interacts with PTK2B/PYK2. Interacts with ASAP2. Interacts with unphosphorylated ITGA4. Interacts with RNF5. Interacts with PDCD10. Interacts with NEK3, the interaction is prolactin-dependent. Interacts with PTK6. Interacts with TGFB1I1. Interacts with SORBS1. Interacts with PARVB. Interacts (via LD motif 4) with PARVA/PARVIN. Interacts (via LD motif 4) with ILK. Interacts (via cytoplasmic domain) with CEACAM1; the interaction is phosphotyrosyl-dependent. Interacts with LIMA1; this complex stabilizes actin dynamics. Interacts with CD36 (via C-terminus). Interacts with TRIM15. Interacts with PAK4; PAK4 acts as a scaffold to suppport PAXI phosphorylation at Ser-272. In terms of processing, phosphorylated by MAPK1/ERK2. Phosphorylated on tyrosine residues during integrin-mediated cell adhesion, embryonic development, fibroblast transformation and following stimulation of cells by mitogens. Phosphorylation at Ser-244 by CDK5 reduces its interaction with PTK2/FAK1 in matrix-cell focal adhesions (MCFA) during oligodendrocytes (OLs) differentiation. Phosphorylation at Tyr-31 and Tyr-118 by PTK6 promote the activation of RAC1 via CRK/CrKII, thereby promoting migration and invasion. Phosphorylation at Ser-250 by SLK is required for PXN redistribution and cell motility. Phosphorylation at Ser-272 promotes focal adhesion disassembly during cell migration.

It localises to the cytoplasm. The protein resides in the cytoskeleton. Its subcellular location is the cell junction. It is found in the focal adhesion. The protein localises to the cell cortex. Cytoskeletal protein involved in actin-membrane attachment at sites of cell adhesion to the extracellular matrix (focal adhesion). Recruits other proteins such as TRIM15 to focal adhesion. In Mus musculus (Mouse), this protein is Paxillin.